The following is a 396-amino-acid chain: NADH-quinone oxidoreductase subunit D 1 (396 aa).

Belongs to the complex I 49 kDa subunit family. In terms of assembly, NDH-1 is composed of 14 different subunits. Subunits NuoB, C, D, E, F, and G constitute the peripheral sector of the complex.

It localises to the cell inner membrane. It carries out the reaction a quinone + NADH + 5 H(+)(in) = a quinol + NAD(+) + 4 H(+)(out). In terms of biological role, NDH-1 shuttles electrons from NADH, via FMN and iron-sulfur (Fe-S) centers, to quinones in the respiratory chain. The immediate electron acceptor for the enzyme in this species is believed to be ubiquinone. Couples the redox reaction to proton translocation (for every two electrons transferred, four hydrogen ions are translocated across the cytoplasmic membrane), and thus conserves the redox energy in a proton gradient. This Rhizobium etli (strain ATCC 51251 / DSM 11541 / JCM 21823 / NBRC 15573 / CFN 42) protein is NADH-quinone oxidoreductase subunit D 1.